Here is a 368-residue protein sequence, read N- to C-terminus: Endophilin-A2 (368 aa).

A membrane-binding amphipathic helix region spans residues 1 to 21 (MSVAGLKKQFYKASQLVSEKV). The BAR domain maps to 18 to 249 (SEKVGGAEGT…LKRRVREASS (232 aa)). The interval 60-87 (PNPASRAKLTMLNTVSKIRGQVKNPGYP) is required for dimerization upon membrane association. A coiled-coil region spans residues 180–250 (DEELRQALEK…KRRVREASSR (71 aa)). The interaction with ARC stretch occupies residues 218–254 (LVDAQLDYHRQAVQILEELADKLKRRVREASSRPKRE). Residues 244-307 (VREASSRPKR…MPSKSMPPLD (64 aa)) form a disordered region. Over residues 245–263 (REASSRPKREFKPRPREPF) the composition is skewed to basic and acidic residues. Residues S288 and S292 each carry the phosphoserine modification. The SH3 domain maps to 306 to 365 (LDQPSCKALYDFEPENDGELGFREGDLITLTNQIDENWYEGMLHGQSGFFPLSYVQVLVP). The residue at position 315 (Y315) is a Phosphotyrosine.

Belongs to the endophilin family. In terms of assembly, interacts with ARC, SYNJ1 and DNM1. Interacts with PDCD6IP. Interacts with BIN2.

The protein localises to the cytoplasm. The protein resides in the early endosome membrane. It is found in the cell projection. Its subcellular location is the podosome. In terms of biological role, implicated in endocytosis. May recruit other proteins to membranes with high curvature. In Mus musculus (Mouse), this protein is Endophilin-A2 (Sh3gl1).